We begin with the raw amino-acid sequence, 357 residues long: S-adenosylmethionine:tRNA ribosyltransferase-isomerase (357 aa).

It belongs to the QueA family. As to quaternary structure, monomer.

It is found in the cytoplasm. It carries out the reaction 7-aminomethyl-7-carbaguanosine(34) in tRNA + S-adenosyl-L-methionine = epoxyqueuosine(34) in tRNA + adenine + L-methionine + 2 H(+). It functions in the pathway tRNA modification; tRNA-queuosine biosynthesis. Its function is as follows. Transfers and isomerizes the ribose moiety from AdoMet to the 7-aminomethyl group of 7-deazaguanine (preQ1-tRNA) to give epoxyqueuosine (oQ-tRNA). The protein is S-adenosylmethionine:tRNA ribosyltransferase-isomerase of Buchnera aphidicola subsp. Acyrthosiphon pisum (strain Tuc7).